The chain runs to 498 residues: Glycerol kinase (498 aa).

Thr-13 serves as a coordination point for ADP. Residues Thr-13, Thr-14, and Ser-15 each contribute to the ATP site. Thr-13 is a binding site for sn-glycerol 3-phosphate. Arg-17 serves as a coordination point for ADP. Positions 83, 84, 135, and 244 each coordinate sn-glycerol 3-phosphate. 5 residues coordinate glycerol: Arg-83, Glu-84, Tyr-135, Asp-244, and Gln-245. ADP contacts are provided by Thr-266 and Gly-309. Positions 266, 309, 313, and 410 each coordinate ATP. Residues Gly-410 and Asn-414 each coordinate ADP.

Belongs to the FGGY kinase family. As to quaternary structure, homotetramer and homodimer (in equilibrium).

It catalyses the reaction glycerol + ATP = sn-glycerol 3-phosphate + ADP + H(+). It functions in the pathway polyol metabolism; glycerol degradation via glycerol kinase pathway; sn-glycerol 3-phosphate from glycerol: step 1/1. Activated by phosphorylation and inhibited by fructose 1,6-bisphosphate (FBP). Functionally, key enzyme in the regulation of glycerol uptake and metabolism. Catalyzes the phosphorylation of glycerol to yield sn-glycerol 3-phosphate. The chain is Glycerol kinase from Symbiobacterium thermophilum (strain DSM 24528 / JCM 14929 / IAM 14863 / T).